Here is a 34-residue protein sequence, read N- to C-terminus: Photosystem II reaction center protein M (34 aa).

Residues 5 to 25 (ILAFIATALFILVPTAFLLII) traverse the membrane as a helical segment.

This sequence belongs to the PsbM family. In terms of assembly, PSII is composed of 1 copy each of membrane proteins PsbA, PsbB, PsbC, PsbD, PsbE, PsbF, PsbH, PsbI, PsbJ, PsbK, PsbL, PsbM, PsbT, PsbX, PsbY, PsbZ, Psb30/Ycf12, at least 3 peripheral proteins of the oxygen-evolving complex and a large number of cofactors. It forms dimeric complexes.

It localises to the plastid. It is found in the chloroplast thylakoid membrane. In terms of biological role, one of the components of the core complex of photosystem II (PSII). PSII is a light-driven water:plastoquinone oxidoreductase that uses light energy to abstract electrons from H(2)O, generating O(2) and a proton gradient subsequently used for ATP formation. It consists of a core antenna complex that captures photons, and an electron transfer chain that converts photonic excitation into a charge separation. This subunit is found at the monomer-monomer interface. The sequence is that of Photosystem II reaction center protein M from Coffea arabica (Arabian coffee).